The chain runs to 530 residues: MNNPRPIRRALISVSDKTGIVEFAQALTERGVDILSTGGTARLLAEKNIPVTEVSDYTGFPEMMDGRVKTLHPKVHGGVLGRRGQDDGIMEQHGINPIDIVVVNLYPFAETVAKEGCTLADAVENIDIGGPTMVRSAAKNHKDVTIVVNAHDYDRVIAEMDTNDKSLTQATRFDLAIAAFEHTASYDGMIANYFGTMVPSYGENKEGDNESKFPRTFNQQFEKKQDMRYGENSHQAAAFYVEANPEEASVSTARQIQGKALSYNNIADTDAALECVKEFNEPACVIVKHANPCGVALGKDVLEAYHRAYQTDPTSAFGGIIAFNRELDAATATAITERQFVEVIIAPSVSAEAIEIIAAKKNLRLLECGEWSTKTTEFDIKRVNGGLLVQDRDQGMVSEDELEVVSKRQPTAEELKDALFCWKVAKYVKSNAIVYSKGDMTIGVGAGQMSRVYSAKIAGIKAADEGLVVEGCAMASDAFFPFRDGIDAAAEAGIKCVIQPGGSMRDDEVIAAADEHGMAMIFTGMRHFRH.

Residues 1–148 (MNNPRPIRRA…KNHKDVTIVV (148 aa)) enclose the MGS-like domain.

The protein belongs to the PurH family.

It catalyses the reaction (6R)-10-formyltetrahydrofolate + 5-amino-1-(5-phospho-beta-D-ribosyl)imidazole-4-carboxamide = 5-formamido-1-(5-phospho-D-ribosyl)imidazole-4-carboxamide + (6S)-5,6,7,8-tetrahydrofolate. The enzyme catalyses IMP + H2O = 5-formamido-1-(5-phospho-D-ribosyl)imidazole-4-carboxamide. The protein operates within purine metabolism; IMP biosynthesis via de novo pathway; 5-formamido-1-(5-phospho-D-ribosyl)imidazole-4-carboxamide from 5-amino-1-(5-phospho-D-ribosyl)imidazole-4-carboxamide (10-formyl THF route): step 1/1. It functions in the pathway purine metabolism; IMP biosynthesis via de novo pathway; IMP from 5-formamido-1-(5-phospho-D-ribosyl)imidazole-4-carboxamide: step 1/1. This is Bifunctional purine biosynthesis protein PurH from Aliivibrio salmonicida (strain LFI1238) (Vibrio salmonicida (strain LFI1238)).